Reading from the N-terminus, the 376-residue chain is GDSL esterase/lipase At5g55050 (376 aa).

A signal peptide spans 1 to 29 (MPTNNTPFLTIFLLFLGLLRFDSFPGLEA). Ser-46 functions as the Nucleophile in the catalytic mechanism. N-linked (GlcNAc...) asparagine glycosylation is found at Asn-134 and Asn-245. Residues Asp-340 and His-344 contribute to the active site.

The protein belongs to the 'GDSL' lipolytic enzyme family.

The protein localises to the secreted. The polypeptide is GDSL esterase/lipase At5g55050 (Arabidopsis thaliana (Mouse-ear cress)).